The primary structure comprises 341 residues: Ribosomal RNA small subunit methyltransferase H (341 aa).

S-adenosyl-L-methionine contacts are provided by residues 47–49 (GGY), D64, F91, D109, and Q116.

This sequence belongs to the methyltransferase superfamily. RsmH family.

The protein resides in the cytoplasm. It catalyses the reaction cytidine(1402) in 16S rRNA + S-adenosyl-L-methionine = N(4)-methylcytidine(1402) in 16S rRNA + S-adenosyl-L-homocysteine + H(+). In terms of biological role, specifically methylates the N4 position of cytidine in position 1402 (C1402) of 16S rRNA. In Rhizobium leguminosarum bv. trifolii (strain WSM1325), this protein is Ribosomal RNA small subunit methyltransferase H.